Here is a 158-residue protein sequence, read N- to C-terminus: Placenta growth factor (158 aa).

The N-terminal stretch at 1-18 is a signal peptide; the sequence is MLVMKLFTCFLQVLAGLA. Residues N29 and N30 are each glycosylated (N-linked (GlcNAc...) asparagine). 3 disulfide bridges follow: C48–C90, C79–C125, and C83–C127. N97 is a glycosylation site (N-linked (GlcNAc...) asparagine). Positions 136–158 are disordered; sequence AERRKTKGKRKRSRNSQTEEPHP. Residues 137–149 show a composition bias toward basic residues; that stretch reads ERRKTKGKRKRSR.

This sequence belongs to the PDGF/VEGF growth factor family. Antiparallel homodimer; disulfide-linked. Also found as heterodimer with VEGFA/VEGF.

Its subcellular location is the secreted. Growth factor active in angiogenesis and endothelial cell growth, stimulating their proliferation and migration. It binds to the receptor FLT1/VEGFR-1. Also promotes cell tumor growth. The sequence is that of Placenta growth factor (Pgf) from Mus musculus (Mouse).